A 269-amino-acid polypeptide reads, in one-letter code: Hydroxyethylthiazole kinase (269 aa).

Residue Met45 participates in substrate binding. Arg121 and Thr167 together coordinate ATP. Position 194 (Gly194) interacts with substrate.

The protein belongs to the Thz kinase family. The cofactor is Mg(2+).

The catalysed reaction is 5-(2-hydroxyethyl)-4-methylthiazole + ATP = 4-methyl-5-(2-phosphooxyethyl)-thiazole + ADP + H(+). The protein operates within cofactor biosynthesis; thiamine diphosphate biosynthesis; 4-methyl-5-(2-phosphoethyl)-thiazole from 5-(2-hydroxyethyl)-4-methylthiazole: step 1/1. Functionally, catalyzes the phosphorylation of the hydroxyl group of 4-methyl-5-beta-hydroxyethylthiazole (THZ). This Brevibacillus brevis (strain 47 / JCM 6285 / NBRC 100599) protein is Hydroxyethylthiazole kinase.